The sequence spans 447 residues: N-succinylarginine dihydrolase (447 aa).

Substrate is bound by residues 19 to 28 (AGLSFGNEAS), asparagine 110, and 137 to 138 (HR). The active site involves glutamate 174. Arginine 212 is a binding site for substrate. The active site involves histidine 248. Residues aspartate 250 and asparagine 359 each contribute to the substrate site. Residue cysteine 365 is the Nucleophile of the active site.

This sequence belongs to the succinylarginine dihydrolase family. Homodimer.

It carries out the reaction N(2)-succinyl-L-arginine + 2 H2O + 2 H(+) = N(2)-succinyl-L-ornithine + 2 NH4(+) + CO2. It functions in the pathway amino-acid degradation; L-arginine degradation via AST pathway; L-glutamate and succinate from L-arginine: step 2/5. Functionally, catalyzes the hydrolysis of N(2)-succinylarginine into N(2)-succinylornithine, ammonia and CO(2). In Escherichia coli (strain ATCC 8739 / DSM 1576 / NBRC 3972 / NCIMB 8545 / WDCM 00012 / Crooks), this protein is N-succinylarginine dihydrolase.